The sequence spans 453 residues: Pup--protein ligase (453 aa).

Mg(2+) is bound at residue Glu-9. Residue Arg-53 coordinates ATP. Tyr-55 contributes to the Mg(2+) binding site. The active-site Proton acceptor is the Asp-57. Glu-63 provides a ligand contact to Mg(2+). Residues Thr-66 and Trp-420 each contribute to the ATP site.

This sequence belongs to the Pup ligase/Pup deamidase family. Pup-conjugating enzyme subfamily.

The catalysed reaction is ATP + [prokaryotic ubiquitin-like protein]-L-glutamate + [protein]-L-lysine = ADP + phosphate + N(6)-([prokaryotic ubiquitin-like protein]-gamma-L-glutamyl)-[protein]-L-lysine.. The protein operates within protein degradation; proteasomal Pup-dependent pathway. Its pathway is protein modification; protein pupylation. Functionally, catalyzes the covalent attachment of the prokaryotic ubiquitin-like protein modifier Pup to the proteasomal substrate proteins, thereby targeting them for proteasomal degradation. This tagging system is termed pupylation. The ligation reaction involves the side-chain carboxylate of the C-terminal glutamate of Pup and the side-chain amino group of a substrate lysine. The sequence is that of Pup--protein ligase from Streptomyces coelicolor (strain ATCC BAA-471 / A3(2) / M145).